The sequence spans 558 residues: Formate--tetrahydrofolate ligase (558 aa).

Residue 66-73 (TPAGEGKT) participates in ATP binding.

This sequence belongs to the formate--tetrahydrofolate ligase family.

The catalysed reaction is (6S)-5,6,7,8-tetrahydrofolate + formate + ATP = (6R)-10-formyltetrahydrofolate + ADP + phosphate. The protein operates within one-carbon metabolism; tetrahydrofolate interconversion. The protein is Formate--tetrahydrofolate ligase of Neisseria meningitidis serogroup C (strain 053442).